The chain runs to 629 residues: RNA polymerase sigma factor RpoD (629 aa).

Positions 183 to 228 (HNGLDEDFSDEDDEEESSNADVEDNEDEEDNESESTSDSSDSDNSI) are disordered. Over residues 187–228 (DEDFSDEDDEEESSNADVEDNEDEEDNESESTSDSSDSDNSI) the composition is skewed to acidic residues. The tract at residues 395–465 (MVEANLRLVI…TRSIADQART (71 aa)) is sigma-70 factor domain-2. An Interaction with polymerase core subunit RpoC motif is present at residues 419 to 422 (DLIQ). The sigma-70 factor domain-3 stretch occupies residues 474–550 (ETINKLNRIS…DSTLELPLDS (77 aa)). A sigma-70 factor domain-4 region spans residues 563–616 (VLEGLTPREAKVLRMRFGIDMNTDHTLEEVGKQFDVTRERIRQIEAKALRKLRH). A DNA-binding region (H-T-H motif) is located at residues 589–608 (LEEVGKQFDVTRERIRQIEA).

The protein belongs to the sigma-70 factor family. RpoD/SigA subfamily. As to quaternary structure, interacts transiently with the RNA polymerase catalytic core.

It is found in the cytoplasm. Its function is as follows. Sigma factors are initiation factors that promote the attachment of RNA polymerase to specific initiation sites and are then released. This sigma factor is the primary sigma factor during exponential growth. This Haemophilus influenzae (strain ATCC 51907 / DSM 11121 / KW20 / Rd) protein is RNA polymerase sigma factor RpoD.